We begin with the raw amino-acid sequence, 519 residues long: Serine/threonine-protein kinase RIO3 (519 aa).

5 positions are modified to phosphoserine: serine 8, serine 112, serine 125, serine 127, and serine 128. Residues phenylalanine 122–glycine 159 are disordered. Positions aspartate 124 to tryptophan 134 are enriched in acidic residues. In terms of domain architecture, Protein kinase spans glutamate 251–aspartate 519. ATP-binding positions include isoleucine 257 to valine 265 and lysine 290. The active-site Proton acceptor is the aspartate 406. A Phosphoserine modification is found at serine 512.

This sequence belongs to the protein kinase superfamily. RIO-type Ser/Thr kinase family. Interacts with CASP10. Interacts with IRF3; RIOK3 probably mediates the interaction of TBK1 with IRF3. Associated with 40S pre-ribosomal particles. Requires Mg(2+) as cofactor. In terms of processing, autophosphorylated (in vitro).

Its subcellular location is the cytoplasm. It carries out the reaction L-seryl-[protein] + ATP = O-phospho-L-seryl-[protein] + ADP + H(+). The catalysed reaction is L-threonyl-[protein] + ATP = O-phospho-L-threonyl-[protein] + ADP + H(+). Its function is as follows. Involved in regulation of type I interferon (IFN)-dependent immune response which plays a critical role in the innate immune response against DNA and RNA viruses. May act as an adapter protein essential for the recruitment of TBK1 to IRF3. Phosphorylates IFIH1 on 'Ser-828' interfering with IFIH1 filament assembly on long dsRNA and resulting in attenuated IFIH1-signaling. Can inhibit CASP10 isoform 7-mediated activation of the NF-kappaB signaling pathway. May play a role in the biogenesis of the 40S ribosomal subunit. Involved in the processing of 21S pre-rRNA to the mature 18S rRNA. This Mus musculus (Mouse) protein is Serine/threonine-protein kinase RIO3 (Riok3).